The sequence spans 317 residues: Malate dehydrogenase (317 aa).

NAD(+) is bound by residues 15–20 (GSGNIG) and D39. R88 and R94 together coordinate substrate. Residues N101 and 124-126 (VTN) contribute to the NAD(+) site. The substrate site is built by N126 and R157. Catalysis depends on H181, which acts as the Proton acceptor.

The protein belongs to the LDH/MDH superfamily. MDH type 3 family.

The catalysed reaction is (S)-malate + NAD(+) = oxaloacetate + NADH + H(+). Functionally, catalyzes the reversible oxidation of malate to oxaloacetate. The chain is Malate dehydrogenase from Ehrlichia ruminantium (strain Gardel).